Reading from the N-terminus, the 645-residue chain is Cytoplasmic dynein 1 intermediate chain 1 (645 aa).

Basic and acidic residues-rich tracts occupy residues 1–13 (MSDKSDLKAELER) and 20–58 (QIREEKKRKEEERKKKEADMQQKKEPVQDDSDLDRKRRE). Disordered stretches follow at residues 1–58 (MSDK…KRRE) and 96–125 (MSPSSKSVSTPSEAGSQDSGDLGPLTRTLQ). The residue at position 2 (Ser-2) is an N-acetylserine. The interval 2–123 (SDKSDLKAEL…SGDLGPLTRT (122 aa)) is interaction with DCTN1. Phosphoserine occurs at positions 50 and 100. Residues 96–107 (MSPSSKSVSTPS) show a composition bias toward low complexity. The residue at position 105 (Thr-105) is a Phosphothreonine. Ser-107, Ser-111, and Ser-114 each carry phosphoserine. Residues 147–163 (KLGVSKVTQVDFLPREV) are interaction with DYNLT1. The disordered stretch occupies residues 169-221 (ETQTPLATHQSEEDEEDEEMVESKVGQDSELENQDKKQEVKEAPPRELTEEEK). Thr-176 is subject to Phosphothreonine. Ser-179 and Ser-197 each carry phosphoserine. A compositionally biased stretch (basic and acidic residues) spans 189–221 (VESKVGQDSELENQDKKQEVKEAPPRELTEEEK). 7 WD repeats span residues 285–334 (SKHR…TTPE), 338–378 (HCQS…RTPV), 387–428 (AHTH…TPQE), 437–477 (SKPV…AGIG), 482–527 (GHQG…PLYS), 530–570 (DNAD…EVPT), and 576–615 (EGASALNRVRWAQAGKEVAVGDSEGRIWVYDVGELAVPHN). Ser-635 carries the post-translational modification Phosphoserine.

This sequence belongs to the dynein intermediate chain family. As to quaternary structure, homodimer. The cytoplasmic dynein 1 complex consists of two catalytic heavy chains (HCs) and a number of non-catalytic subunits presented by intermediate chains (ICs), light intermediate chains (LICs) and light chains (LCs); the composition seems to vary in respect to the IC, LIC and LC composition. The heavy chain homodimer serves as a scaffold for the probable homodimeric assembly of the respective non-catalytic subunits. The ICs and LICs bind directly to the HC dimer and the LCs assemble on the IC dimer. Interacts with DYNC1H1. Interacts with DYNLT1 and DYNLT3. Interacts with DCTN1. Interacts with MCRS1; the interaction is required for the proper distribution of centriolar satellites.

The protein resides in the cytoplasm. It is found in the chromosome. Its subcellular location is the centromere. It localises to the kinetochore. The protein localises to the cytoskeleton. The protein resides in the spindle pole. In terms of biological role, acts as one of several non-catalytic accessory components of the cytoplasmic dynein 1 complex that are thought to be involved in linking dynein to cargos and to adapter proteins that regulate dynein function. Cytoplasmic dynein 1 acts as a motor for the intracellular retrograde motility of vesicles and organelles along microtubules. The intermediate chains mediate the binding of dynein to dynactin via its 150 kDa component (p150-glued) DCTN1. May play a role in mediating the interaction of cytoplasmic dynein with membranous organelles and kinetochores. This is Cytoplasmic dynein 1 intermediate chain 1 (DYNC1I1) from Homo sapiens (Human).